The sequence spans 543 residues: CTP synthase (543 aa).

An amidoligase domain region spans residues 1-265 (MARYIFITGG…DDEVLAAFGI (265 aa)). Ser-13 is a CTP binding site. Ser-13 lines the UTP pocket. Residue 14-19 (SLGKGL) participates in ATP binding. Tyr-54 contacts L-glutamine. Asp-71 contributes to the ATP binding site. Mg(2+) is bound by residues Asp-71 and Glu-139. Residues 146–148 (DIE), 186–191 (KTKPTQ), and Lys-222 each bind CTP. UTP is bound by residues 186 to 191 (KTKPTQ) and Lys-222. Position 238-240 (238-240 (RDV)) interacts with ATP. A Glutamine amidotransferase type-1 domain is found at 291-542 (TIAIVGKYTG…VQAAVVQSRL (252 aa)). Position 353 (Gly-353) interacts with L-glutamine. Cys-380 (nucleophile; for glutamine hydrolysis) is an active-site residue. L-glutamine is bound by residues 381 to 384 (FGMQ), Glu-404, and Arg-470. Active-site residues include His-515 and Glu-517.

The protein belongs to the CTP synthase family. As to quaternary structure, homotetramer.

The enzyme catalyses UTP + L-glutamine + ATP + H2O = CTP + L-glutamate + ADP + phosphate + 2 H(+). It catalyses the reaction L-glutamine + H2O = L-glutamate + NH4(+). It carries out the reaction UTP + NH4(+) + ATP = CTP + ADP + phosphate + 2 H(+). It participates in pyrimidine metabolism; CTP biosynthesis via de novo pathway; CTP from UDP: step 2/2. Allosterically activated by GTP, when glutamine is the substrate; GTP has no effect on the reaction when ammonia is the substrate. The allosteric effector GTP functions by stabilizing the protein conformation that binds the tetrahedral intermediate(s) formed during glutamine hydrolysis. Inhibited by the product CTP, via allosteric rather than competitive inhibition. Catalyzes the ATP-dependent amination of UTP to CTP with either L-glutamine or ammonia as the source of nitrogen. Regulates intracellular CTP levels through interactions with the four ribonucleotide triphosphates. The polypeptide is CTP synthase (Rhodopseudomonas palustris (strain BisB18)).